The chain runs to 84 residues: Small ribosomal subunit protein bS18A (84 aa).

The protein belongs to the bacterial ribosomal protein bS18 family. Part of the 30S ribosomal subunit. Forms a tight heterodimer with protein bS6.

Its function is as follows. Binds as a heterodimer with protein bS6 to the central domain of the 16S rRNA, where it helps stabilize the platform of the 30S subunit. The chain is Small ribosomal subunit protein bS18A (rpsR1) from Mycobacterium bovis (strain ATCC BAA-935 / AF2122/97).